The following is a 130-amino-acid chain: Large ribosomal subunit protein bL19 (130 aa).

The protein belongs to the bacterial ribosomal protein bL19 family.

In terms of biological role, this protein is located at the 30S-50S ribosomal subunit interface and may play a role in the structure and function of the aminoacyl-tRNA binding site. The polypeptide is Large ribosomal subunit protein bL19 (Cupriavidus taiwanensis (strain DSM 17343 / BCRC 17206 / CCUG 44338 / CIP 107171 / LMG 19424 / R1) (Ralstonia taiwanensis (strain LMG 19424))).